The chain runs to 337 residues: uncharacterized protein (337 aa).

Residues 1 to 11 (MSEIEEEEEEG) are compositionally biased toward acidic residues. Residues 1-20 (MSEIEEEEEEGSASAITGSR) are disordered. Serine 2 bears the N-acetylserine mark. Positions 50–130 (ALSTRVSALE…LQRDVSKLEG (81 aa)) form a coiled coil. A disordered region spans residues 139–242 (LQDDDQNAGT…PISPRRHSVS (104 aa)). Residues 170–182 (SSIQSQQASEAIE) are compositionally biased toward low complexity. The span at 197–211 (LSASLPLVSQTTTPR) shows a compositional bias: polar residues. Phosphothreonine is present on threonine 213. Residue serine 217 is modified to Phosphoserine. Over residues 223-233 (ASGTPKTTSRP) the composition is skewed to polar residues. Threonine 226 bears the Phosphothreonine mark. A Phosphoserine modification is found at serine 235.

This is an uncharacterized protein from Arabidopsis thaliana (Mouse-ear cress).